Consider the following 285-residue polypeptide: Single myb histone 3 (285 aa).

The disordered stretch occupies residues 1 to 35 (MGAPKQKWTSEEEDALRRGVRKHGAGKWRTIQKDP). The HTH myb-type domain occupies 1–60 (MGAPKQKWTSEEEDALRRGVRKHGAGKWRTIQKDPQFSPILSSRSNIDLKDKWRNLSFSA). The H-T-H motif DNA-binding region spans 28-56 (WRTIQKDPQFSPILSSRSNIDLKDKWRNL). Residues 113 to 181 (TPPKYGAMIM…KVDNFYRLPD (69 aa)) enclose the H15 domain. Residues 226 to 255 (VKVTDAEAKAHDAHDQMMEAERMLKMAEDT) adopt a coiled-coil conformation.

This sequence belongs to the histone H1/H5 family. SMH subfamily. Forms a homodimer and heterodimers.

Its subcellular location is the nucleus. It localises to the chromosome. The protein localises to the nucleolus. It is found in the telomere. Functionally, binds preferentially double-stranded telomeric repeats, but may also bind to the single telomeric strand. The sequence is that of Single myb histone 3 (SMH3) from Zea mays (Maize).